We begin with the raw amino-acid sequence, 143 residues long: S-adenosylmethionine decarboxylase proenzyme (143 aa).

Serine 66 (schiff-base intermediate with substrate; via pyruvic acid) is an active-site residue. Serine 66 carries the pyruvic acid (Ser); by autocatalysis modification. Histidine 71 serves as the catalytic Proton acceptor; for processing activity. The active-site Proton donor; for catalytic activity is the cysteine 86.

It belongs to the prokaryotic AdoMetDC family. Type 1 subfamily. As to quaternary structure, heterotetramer of two alpha and two beta chains arranged as a dimer of alpha/beta heterodimers. The cofactor is pyruvate. Is synthesized initially as an inactive proenzyme. Formation of the active enzyme involves a self-maturation process in which the active site pyruvoyl group is generated from an internal serine residue via an autocatalytic post-translational modification. Two non-identical subunits are generated from the proenzyme in this reaction, and the pyruvate is formed at the N-terminus of the alpha chain, which is derived from the carboxyl end of the proenzyme. The post-translation cleavage follows an unusual pathway, termed non-hydrolytic serinolysis, in which the side chain hydroxyl group of the serine supplies its oxygen atom to form the C-terminus of the beta chain, while the remainder of the serine residue undergoes an oxidative deamination to produce ammonia and the pyruvoyl group blocking the N-terminus of the alpha chain.

It carries out the reaction S-adenosyl-L-methionine + H(+) = S-adenosyl 3-(methylsulfanyl)propylamine + CO2. It functions in the pathway amine and polyamine biosynthesis; S-adenosylmethioninamine biosynthesis; S-adenosylmethioninamine from S-adenosyl-L-methionine: step 1/1. In terms of biological role, catalyzes the decarboxylation of S-adenosylmethionine to S-adenosylmethioninamine (dcAdoMet), the propylamine donor required for the synthesis of the polyamines spermine and spermidine from the diamine putrescine. The chain is S-adenosylmethionine decarboxylase proenzyme from Thermococcus kodakarensis (strain ATCC BAA-918 / JCM 12380 / KOD1) (Pyrococcus kodakaraensis (strain KOD1)).